Here is a 417-residue protein sequence, read N- to C-terminus: NADH-quinone oxidoreductase subunit D (417 aa).

It belongs to the complex I 49 kDa subunit family. NDH-1 is composed of 14 different subunits. Subunits NuoB, C, D, E, F, and G constitute the peripheral sector of the complex.

It is found in the cell inner membrane. It carries out the reaction a quinone + NADH + 5 H(+)(in) = a quinol + NAD(+) + 4 H(+)(out). Functionally, NDH-1 shuttles electrons from NADH, via FMN and iron-sulfur (Fe-S) centers, to quinones in the respiratory chain. The immediate electron acceptor for the enzyme in this species is believed to be ubiquinone. Couples the redox reaction to proton translocation (for every two electrons transferred, four hydrogen ions are translocated across the cytoplasmic membrane), and thus conserves the redox energy in a proton gradient. The sequence is that of NADH-quinone oxidoreductase subunit D from Nitrosococcus oceani (strain ATCC 19707 / BCRC 17464 / JCM 30415 / NCIMB 11848 / C-107).